Reading from the N-terminus, the 1904-residue chain is Callose synthase 10 (1904 aa).

One copy of the HAT 1 repeat lies at 100–132; sequence VIKQKLAKRDGASIDRDRDIERLWEFYKLYKRR. 6 consecutive transmembrane segments (helical) span residues 491–511, 532–552, 562–582, 594–614, 661–681, and 722–742; these read SFIR…IIAF, AIMN…AYSM, VIRF…YVKV, FFFH…LIFG, YVAF…FLQI, and VLAI…AIIG. An LRR 1 repeat occupies 678 to 701; it reads FLQIKPLVKPTNTIIHLPPFQYSW. LRR repeat units follow at residues 751–774 and 925–948; these read LGEI…FAQN and TLNL…LIRN. The stretch at 1074-1107 is one HAT 2 repeat; that stretch reads YSSSELRSENEDGISILFYLQKIFPDEWENFLER. The LRR 4 repeat unit spans residues 1159 to 1181; the sequence is FLERRGLGVDDASLTNMPRGFES. The next 9 helical transmembrane spans lie at 1474–1494, 1529–1549, 1554–1574, 1621–1641, 1644–1664, 1747–1767, 1783–1803, 1811–1831, and 1853–1873; these read FTTV…YVFL, FLVQ…ILEL, AIFS…TFSL, AFEV…DGGA, FVLL…APYI, LALY…FKLF, FLQG…IAMT, FACV…AITW, and AAMG…PFIS. The stretch at 1659 to 1691 is one HAT 3 repeat; that stretch reads LFAPYIFNPSGFEWQKTVEDFEDWVSWLMYKGG.

It belongs to the glycosyltransferase 48 family.

It localises to the cell membrane. The catalysed reaction is [(1-&gt;3)-beta-D-glucosyl](n) + UDP-alpha-D-glucose = [(1-&gt;3)-beta-D-glucosyl](n+1) + UDP + H(+). Its function is as follows. Involved in sporophytic and gametophytic development. Required for normal plant development and for the proper accumulation of callose at cell plates, cll walls and plasmodesmata. During pollen formation, required for the entry of microspores into mitosis. During plant growth and development, callose is found as a transitory component of the cell plate in dividing cells, is a major component of pollen mother cell walls and pollen tubes, and is found as a structural component of plasmodesmatal canals. Required for proper cell division and tissue patterning throughout plant organs, including stomatal patterning. The sequence is that of Callose synthase 10 (CALS10) from Arabidopsis thaliana (Mouse-ear cress).